The chain runs to 127 residues: uncharacterized protein (127 aa).

This is an uncharacterized protein from Escherichia coli (strain K12).